We begin with the raw amino-acid sequence, 207 residues long: Recombination protein RecR (207 aa).

The segment at Cys-60–Cys-75 adopts a C4-type zinc-finger fold. Residues Ser-83–Ala-178 enclose the Toprim domain.

This sequence belongs to the RecR family.

May play a role in DNA repair. It seems to be involved in an RecBC-independent recombinational process of DNA repair. It may act with RecF and RecO. The polypeptide is Recombination protein RecR (Porphyromonas gingivalis (strain ATCC BAA-308 / W83)).